Reading from the N-terminus, the 656-residue chain is UvrABC system protein C (656 aa).

The 80-residue stretch at K41–I120 folds into the GIY-YIG domain. The UVR domain occupies D230–L265.

This sequence belongs to the UvrC family. Interacts with UvrB in an incision complex.

Its subcellular location is the cytoplasm. Its function is as follows. The UvrABC repair system catalyzes the recognition and processing of DNA lesions. UvrC both incises the 5' and 3' sides of the lesion. The N-terminal half is responsible for the 3' incision and the C-terminal half is responsible for the 5' incision. The chain is UvrABC system protein C from Prochlorococcus marinus subsp. pastoris (strain CCMP1986 / NIES-2087 / MED4).